A 167-amino-acid chain; its full sequence is Ubiquitin-fold modifier-conjugating enzyme 1 (167 aa).

The active-site Glycyl thioester intermediate is the cysteine 116. A Glycyl lysine isopeptide (Lys-Gly) (interchain with G-Cter in UFM1) cross-link involves residue lysine 122.

Belongs to the ubiquitin-conjugating enzyme family. UFC1 subfamily. In terms of assembly, interacts with UBA5 (via C-terminus). Interacts with UFL1. Interacts with UFM1. Interacts with KIRREL3. In terms of processing, ufmylated at Lys-122. Deufmylated by UFSP1.

Its function is as follows. E2-like enzyme which specifically catalyzes the second step in ufmylation. Accepts the ubiquitin-like modifier UFM1 from the E1 enzyme UBA5 and forms an intermediate with UFM1 via a thioester linkage. Ufmylation is involved in various processes, such as ribosome recycling, response to DNA damage, interferon response or reticulophagy (also called ER-phagy). This is Ubiquitin-fold modifier-conjugating enzyme 1 from Rattus norvegicus (Rat).